A 152-amino-acid chain; its full sequence is Membrane-spanning 4-domains subfamily A member 13 (152 aa).

Helical transmembrane passes span 1–21 (MIGI…MGQI), 32–52 (TYKT…VFLI), 66–86 (TLII…LTII), and 111–131 (ILLF…IYSC).

Belongs to the MS4A family.

The protein localises to the membrane. May be involved in signal transduction as a component of a multimeric receptor complex. The sequence is that of Membrane-spanning 4-domains subfamily A member 13 (MS4A13) from Homo sapiens (Human).